Consider the following 660-residue polypeptide: Putative ABC transporter ATP-binding MG390 homolog (660 aa).

The 121-residue stretch at 6–126 (QEQPNECGIC…KQWTGYAATV (121 aa)) folds into the Peptidase C39 domain. Cys-12 is an active-site residue. 6 consecutive transmembrane segments (helical) span residues 150 to 170 (LIIF…LLAT), 188 to 208 (IVVF…LYAL), 265 to 285 (HIPN…LIGI), 290 to 310 (FLWI…YDFF), 379 to 399 (SFAQ…GIIE), and 402 to 422 (YTLA…AYAT). The 197-residue stretch at 464–660 (INLNNCSITL…INLSPYLQQT (197 aa)) folds into the ABC transporter domain. 494–501 (GENGSGKS) provides a ligand contact to ATP.

It belongs to the ABC transporter superfamily.

It is found in the cell membrane. This is Putative ABC transporter ATP-binding MG390 homolog from Mycoplasma pneumoniae (strain ATCC 29342 / M129 / Subtype 1) (Mycoplasmoides pneumoniae).